The following is a 463-amino-acid chain: Bifunctional protein HldE (463 aa).

The ribokinase stretch occupies residues 1–315 (MKKILVIGDL…LILNQTHPKI (315 aa)). 191-194 (NRAE) contacts ATP. Asp-260 is a catalytic residue. Positions 334 to 463 (FTNGCFDLLH…IEKIKRTHND (130 aa)) are cytidylyltransferase.

In the N-terminal section; belongs to the carbohydrate kinase PfkB family. This sequence in the C-terminal section; belongs to the cytidylyltransferase family. As to quaternary structure, homodimer.

The catalysed reaction is D-glycero-beta-D-manno-heptose 7-phosphate + ATP = D-glycero-beta-D-manno-heptose 1,7-bisphosphate + ADP + H(+). The enzyme catalyses D-glycero-beta-D-manno-heptose 1-phosphate + ATP + H(+) = ADP-D-glycero-beta-D-manno-heptose + diphosphate. It participates in nucleotide-sugar biosynthesis; ADP-L-glycero-beta-D-manno-heptose biosynthesis; ADP-L-glycero-beta-D-manno-heptose from D-glycero-beta-D-manno-heptose 7-phosphate: step 1/4. Its pathway is nucleotide-sugar biosynthesis; ADP-L-glycero-beta-D-manno-heptose biosynthesis; ADP-L-glycero-beta-D-manno-heptose from D-glycero-beta-D-manno-heptose 7-phosphate: step 3/4. Catalyzes the phosphorylation of D-glycero-D-manno-heptose 7-phosphate at the C-1 position to selectively form D-glycero-beta-D-manno-heptose-1,7-bisphosphate. Its function is as follows. Catalyzes the ADP transfer from ATP to D-glycero-beta-D-manno-heptose 1-phosphate, yielding ADP-D-glycero-beta-D-manno-heptose. The chain is Bifunctional protein HldE from Helicobacter pylori (strain HPAG1).